The primary structure comprises 820 residues: DNA mismatch repair protein MutS (820 aa).

618–625 (GPNMAGKS) lines the ATP pocket.

It belongs to the DNA mismatch repair MutS family.

In terms of biological role, this protein is involved in the repair of mismatches in DNA. It is possible that it carries out the mismatch recognition step. This protein has a weak ATPase activity. This is DNA mismatch repair protein MutS from Chlamydia trachomatis serovar A (strain ATCC VR-571B / DSM 19440 / HAR-13).